The following is a 1178-amino-acid chain: DNA-directed RNA polymerase subunit beta' (1178 aa).

4 residues coordinate Zn(2+): cysteine 60, cysteine 62, cysteine 75, and cysteine 78. Positions 450, 452, and 454 each coordinate Mg(2+). Cysteine 795, cysteine 869, cysteine 876, and cysteine 879 together coordinate Zn(2+).

It belongs to the RNA polymerase beta' chain family. In terms of assembly, the RNAP catalytic core consists of 2 alpha, 1 beta, 1 beta' and 1 omega subunit. When a sigma factor is associated with the core the holoenzyme is formed, which can initiate transcription. Mg(2+) serves as cofactor. The cofactor is Zn(2+).

It catalyses the reaction RNA(n) + a ribonucleoside 5'-triphosphate = RNA(n+1) + diphosphate. DNA-dependent RNA polymerase catalyzes the transcription of DNA into RNA using the four ribonucleoside triphosphates as substrates. The protein is DNA-directed RNA polymerase subunit beta' of Clostridium botulinum (strain Langeland / NCTC 10281 / Type F).